Here is a 120-residue protein sequence, read N- to C-terminus: Ribonuclease P protein component (120 aa).

Belongs to the RnpA family. Consists of a catalytic RNA component (M1 or rnpB) and a protein subunit.

It catalyses the reaction Endonucleolytic cleavage of RNA, removing 5'-extranucleotides from tRNA precursor.. Its function is as follows. RNaseP catalyzes the removal of the 5'-leader sequence from pre-tRNA to produce the mature 5'-terminus. It can also cleave other RNA substrates such as 4.5S RNA. The protein component plays an auxiliary but essential role in vivo by binding to the 5'-leader sequence and broadening the substrate specificity of the ribozyme. The protein is Ribonuclease P protein component of Desulfotalea psychrophila (strain LSv54 / DSM 12343).